The following is a 197-amino-acid chain: Recombination protein RecR (197 aa).

Residues 56–71 (CVRCFSLTDAETCNFC) form a C4-type zinc finger. The Toprim domain occupies 79–174 (RVLCVVETFA…RVTRIAQGLP (96 aa)).

This sequence belongs to the RecR family.

In terms of biological role, may play a role in DNA repair. It seems to be involved in an RecBC-independent recombinational process of DNA repair. It may act with RecF and RecO. The chain is Recombination protein RecR from Myxococcus xanthus (strain DK1622).